The following is a 265-amino-acid chain: Type III pantothenate kinase (265 aa).

6 to 13 (DVGNTHTV) is a binding site for ATP. Residue 112-115 (GADR) coordinates substrate. Residue Asp114 is the Proton acceptor of the active site. Asp134 contributes to the K(+) binding site. An ATP-binding site is contributed by Thr137. Substrate is bound at residue Thr189.

Belongs to the type III pantothenate kinase family. In terms of assembly, homodimer. NH4(+) is required as a cofactor. It depends on K(+) as a cofactor.

The protein localises to the cytoplasm. It carries out the reaction (R)-pantothenate + ATP = (R)-4'-phosphopantothenate + ADP + H(+). It participates in cofactor biosynthesis; coenzyme A biosynthesis; CoA from (R)-pantothenate: step 1/5. Functionally, catalyzes the phosphorylation of pantothenate (Pan), the first step in CoA biosynthesis. The polypeptide is Type III pantothenate kinase (Streptomyces griseus subsp. griseus (strain JCM 4626 / CBS 651.72 / NBRC 13350 / KCC S-0626 / ISP 5235)).